The sequence spans 910 residues: DNA mismatch repair protein MutS (910 aa).

Gly658–Ser665 provides a ligand contact to ATP.

This sequence belongs to the DNA mismatch repair MutS family.

In terms of biological role, this protein is involved in the repair of mismatches in DNA. It is possible that it carries out the mismatch recognition step. This protein has a weak ATPase activity. This Brucella anthropi (strain ATCC 49188 / DSM 6882 / CCUG 24695 / JCM 21032 / LMG 3331 / NBRC 15819 / NCTC 12168 / Alc 37) (Ochrobactrum anthropi) protein is DNA mismatch repair protein MutS.